Reading from the N-terminus, the 529-residue chain is RE1-silencing transcription factor B (529 aa).

The C2H2-type 1 zinc finger occupies 156–178 (FRCKPCQYKAESEEEFVHHIKIH). Residues 188 to 210 (SNKKAQGNEADSSISEESDVSKG) form a disordered region. 7 consecutive C2H2-type zinc fingers follow at residues 212 to 234 (IQCD…LKHH), 244 to 266 (YKCT…LRNH), 272 to 294 (YTCS…IRTH), 300 to 322 (YQCI…MRTH), 328 to 351 (FKCE…RQVH), 357 to 379 (LTCP…VELH), and 385 to 408 (FLCP…KSRH). Residues 484–529 (LSSTQKKIKTSDARPEKILDKSRKSSCVKRKSDLLENSNDTQTSTV) are disordered. Basic and acidic residues predominate over residues 492-506 (KTSDARPEKILDKSR). Positions 518-529 (LENSNDTQTSTV) are enriched in polar residues.

The protein localises to the nucleus. Its subcellular location is the cytoplasm. Functionally, transcriptional repressor which binds neuron-restrictive silencer element (NRSE) and represses neuronal gene transcription in non-neuronal cells. Plays a role in the early development of the nervous system and is required for proper patterning of the neuroectoderm during gastrulation. This involves the correct speciation of the neuroepithelial domain and adequate development of the non-neural ectoderm. The protein is RE1-silencing transcription factor B (rest-b) of Xenopus laevis (African clawed frog).